The primary structure comprises 334 residues: Peroxidase 65 (334 aa).

The signal sequence occupies residues 1–28 (MSNMQFSRGFNPFVILFCLAVVAPIISA). 4 cysteine pairs are disulfide-bonded: Cys42–Cys123, Cys75–Cys80, Cys129–Cys326, and Cys208–Cys236. His73 acts as the Proton acceptor in catalysis. Ca(2+) contacts are provided by Asp74, Gly79, Asp81, and Ser83. Pro171 lines the substrate pocket. Residue Asn174 is glycosylated (N-linked (GlcNAc...) asparagine). Heme b is bound at residue His201. Thr202 lines the Ca(2+) pocket. Residue Asn238 is glycosylated (N-linked (GlcNAc...) asparagine). Asp250, Thr253, and Asp258 together coordinate Ca(2+). N-linked (GlcNAc...) asparagine glycans are attached at residues Asn282 and Asn294.

It belongs to the peroxidase family. Classical plant (class III) peroxidase subfamily. Heme b is required as a cofactor. The cofactor is Ca(2+).

It is found in the secreted. It carries out the reaction 2 a phenolic donor + H2O2 = 2 a phenolic radical donor + 2 H2O. Removal of H(2)O(2), oxidation of toxic reductants, biosynthesis and degradation of lignin, suberization, auxin catabolism, response to environmental stresses such as wounding, pathogen attack and oxidative stress. These functions might be dependent on each isozyme/isoform in each plant tissue. The sequence is that of Peroxidase 65 (PER65) from Arabidopsis thaliana (Mouse-ear cress).